The chain runs to 326 residues: MFEIHPIKKVSVVIPVYNEQESLPELINRTTAACESLGKEYEILLIDDGSSDASAQMLVEASQAPDSHIVSILLNRNYGQHSAIMAGFSYVTGDLIITLDADLQNPPEEIPRLVAKADEGYDVVGTVRQNRQDSWFRKTASKMINRLIQRTTGKAMGDYGCMLRAYRRHIVDAMLHCHERSTFIPILANIFARQAVEIPVHHAEREFGESKYSFMRLINLMYDLVTCLTTTPLRMLSLLGSIIATSGFSLAILLVVLRLAFGSQWSGEGVFMLFAVLFTFIGAQFIGMGLLGEYIGRIYNDVRARPRYFVQKVIRPASSIDIEENH.

Residues 1-235 lie on the Cytoplasmic side of the membrane; the sequence is MFEIHPIKKV…TCLTTTPLRM (235 aa). A helical membrane pass occupies residues 236 to 256; that stretch reads LSLLGSIIATSGFSLAILLVV. Over 257-269 the chain is Periplasmic; sequence LRLAFGSQWSGEG. The chain crosses the membrane as a helical span at residues 270-290; sequence VFMLFAVLFTFIGAQFIGMGL. At 291–326 the chain is on the cytoplasmic side; sequence LGEYIGRIYNDVRARPRYFVQKVIRPASSIDIEENH.

Belongs to the glycosyltransferase 2 family.

It localises to the cell inner membrane. It catalyses the reaction UDP-4-deoxy-4-formamido-beta-L-arabinose + di-trans,octa-cis-undecaprenyl phosphate = 4-deoxy-4-formamido-alpha-L-arabinopyranosyl di-trans,octa-cis-undecaprenyl phosphate + UDP. It functions in the pathway glycolipid biosynthesis; 4-amino-4-deoxy-alpha-L-arabinose undecaprenyl phosphate biosynthesis; 4-amino-4-deoxy-alpha-L-arabinose undecaprenyl phosphate from UDP-4-deoxy-4-formamido-beta-L-arabinose and undecaprenyl phosphate: step 1/2. Its pathway is bacterial outer membrane biogenesis; lipopolysaccharide biosynthesis. In terms of biological role, catalyzes the transfer of 4-deoxy-4-formamido-L-arabinose from UDP to undecaprenyl phosphate. The modified arabinose is attached to lipid A and is required for resistance to polymyxin and cationic antimicrobial peptides. The protein is Undecaprenyl-phosphate 4-deoxy-4-formamido-L-arabinose transferase of Escherichia fergusonii (strain ATCC 35469 / DSM 13698 / CCUG 18766 / IAM 14443 / JCM 21226 / LMG 7866 / NBRC 102419 / NCTC 12128 / CDC 0568-73).